Here is a 352-residue protein sequence, read N- to C-terminus: UPF0324 membrane protein BCE_5279 (352 aa).

The next 10 membrane-spanning stretches (helical) occupy residues 25-47 (FGFS…LAEL), 52-71 (IMGQ…AAIG), 111-130 (VLVI…YGLT), 140-162 (GILT…APQV), 169-191 (TAVG…TLLY), 201-223 (YGVF…APGG), 230-252 (AVIV…GLWF), 267-289 (LPIP…GIIP), 291-313 (VVAG…GLGL), and 328-350 (FVAG…YALG).

Belongs to the UPF0324 family.

It localises to the cell membrane. This is UPF0324 membrane protein BCE_5279 from Bacillus cereus (strain ATCC 10987 / NRS 248).